Here is a 241-residue protein sequence, read N- to C-terminus: Accessory protein p30II (241 aa).

Short sequence motifs (nuclear localization signal) lie at residues 73–78 (RRCRSR) and 91–98 (GPRRSRPR). Composition is skewed to low complexity over residues 79 to 100 (CVSPRGGAFSPGGPRRSRPRLS) and 107 to 136 (PSSTASSSSLSFNSSSKDNSPSTNSSTSRS). The tract at residues 79–151 (CVSPRGGAFS…GKHRNSPADT (73 aa)) is disordered. The Mitochondrial targeting signal signature appears at 175 to 184 (LRVWRLCTRR).

It belongs to the HTLV-1 accessory protein p30II family. P30II binds to the KIX domains of CREBBP and EP300.

It localises to the host nucleus. The protein localises to the host nucleolus. Its subcellular location is the host mitochondrion inner membrane. Functionally, p30II is a multifunctional regulator that sequesters EP300/CREBBP and down-regulates CREB-responsive element (CRE) and Tax-responsive element (TRE) mediated transcription. Specifically binds and represses tax/rex mRNA nuclear export. Since Tax and Rex are positive regulators of viral gene expression, their inhibition by p30II reduces virion production, and allows the virus to escape the host immune surveillance and persist latently in an immune-competent host. Its function is as follows. p13II increases mitochondrial permeability to monovalent cations, producing a rapid, membrane potential-dependent influx of potassium. This could involve a channel-forming activity. Interferes with cell proliferation and transformation and promotes apoptosis induced by ceramide and Fas ligand, probably using the Ras signaling. The protein is Accessory protein p30II of Human T-cell leukemia virus 1 (strain Japan ATK-1 subtype A) (HTLV-1).